A 407-amino-acid polypeptide reads, in one-letter code: MEPHRPNVKTAVPLSLESYHISEEYGFLLPDSLKELPDHYRPWMEIANKLPQLIDAHQLQAHVDKMPLLSCQFLKGHREQRLAHLVLSFLTMGYVWQEGEAQPAEVLPRNLALPFVEVSRNLGLPPILVHSDLVLTNWTKKDPDGFLEIGNLETIISFPGGESLHGFILVTALVEKEAVPGIKALVQATNAILQPNQEALLQALQRLRLSIQDITKTLGQMHDYVDPDIFYAGIRIFLSGWKDNPAMPAGLMYEGVSQEPLKYSGGSAAQSTVLHAFDEFLGIRHSKESGDFLYRMRDYMPPSHKAFIEDIHSAPSLRDYILSSGQDHLLTAYNQCVQALAELRSYHITMVTKYLITAAAKAKHGKPNHLPGPPQALKDRGTGGTAVMSFLKSVRDKTLESILHPRG.

Residue histidine 347 coordinates heme.

This sequence belongs to the indoleamine 2,3-dioxygenase family. Heme is required as a cofactor. In terms of tissue distribution, detected in liver, small intestine, spleen, placenta, thymus, lung, brain, kidney, and colon. Also expressed at low level in testis and thyroid. Not expressed in the majority of human tumor samples (&gt;99%).

It carries out the reaction L-tryptophan + O2 = N-formyl-L-kynurenine. It functions in the pathway amino-acid degradation; L-tryptophan degradation via kynurenine pathway; L-kynurenine from L-tryptophan: step 1/2. Its activity is regulated as follows. Activity is inhibited by D-1MT (1-methyl-D-tryptophan) and MTH-trp (methylthiohydantoin-DL-tryptophan) but not L-1MT (1-methyl-L-tryptophan). In terms of biological role, catalyzes the first and rate limiting step of the catabolism of the essential amino acid tryptophan along the kynurenine pathway. Involved in immune regulation. May not play a significant role in tryptophan-related tumoral resistance. This Homo sapiens (Human) protein is Indoleamine 2,3-dioxygenase 2.